Consider the following 795-residue polypeptide: MKPMRNRKQAPSFRKLLKTSKLKLDNKLKNKQFKQESSAKKRRKEQKQLREAVRDVRSKIPKPLETVKKKQPVEEEYEVEEESLPLDMMDEDDVQLMKEMAQRASFLTRDLTYSEPVHANKRKRDDVINKYEKMPRKSKSEPEKEVIHLLPIKDRHGIIPQTMEKPVIPSEEQEENEEEMDTEHTEEVPEEPLRIMTTEELLVHRQVTLEQRKTHIATLASAILSEPENNIRKLKELRSMLMEQDPSVAVTVRKLVMLSLMEVFKDITPSYKIRPLTEAEKAARVKKDTQKLREFEEGLISQYKFYLENLEQILKDWKQMKTKKSEVVSLHAYKGLAEIAVKCLCELMVSLSHFNFHNNIIVLVVPLVNDKCRQISELSMEATRKLFRQDKFGHASLAAVKVISGLVKSRNYDVRPEVLQLLLHLRIKEVEVKKDTEDIAPKQKIMSYKDKKKNLSRMQRKWKKAEEKLERELLEAEASESKEKKLKLNTETLNIVFLTYFRILKRAQKSVLLPSVLEGLAKFAHLINVEFFDDLLIVLHKLIDSGDLTYRESLHCVQTAFNILSGQGDVLNIDPLKFYTHLYKTLYGLHAGATNDDTLIALQCLDVMLTRRRRQVSQQRALAFIKRLSTLALHVLPDSSIGILSTNRVLMQTFPKTDLLLDSDSQGSGIYLPELDEPEYCNAQNSALWELHTLMRHYHPVVQIFAAHLSAGAPSEGSGALKAELSRRSAQELFADYSIKEMTFNPPVSESVPKRKTKSRAFDLSEDLEQLIQAQLEKVSSLHVDFSSCIKAQSV.

Disordered stretches follow at residues 1–88 (MKPM…PLDM), 124–144 (RDDV…EPEK), and 168–190 (IPSE…EVPE). Composition is skewed to basic and acidic residues over residues 22-39 (LKLD…ESSA) and 46-58 (QKQL…DVRS). The span at 74–88 (EEEYEVEEESLPLDM) shows a compositional bias: acidic residues. Residues 171 to 181 (EEQEENEEEMD) are compositionally biased toward acidic residues. A coiled-coil region spans residues 447–492 (SYKDKKKNLSRMQRKWKKAEEKLERELLEAEASESKEKKLKLNTET).

The protein belongs to the CBF/MAK21 family.

The protein resides in the nucleus. It is found in the nucleolus. The polypeptide is Nucleolar complex protein 3 homolog (noc3l) (Xenopus laevis (African clawed frog)).